We begin with the raw amino-acid sequence, 187 residues long: MSYNISLDSLPYFESTYNEEDRSAAAQIVEEELKRSGGLLIKQEEQKKKFQSHRLSDRLENAIVAAGKGEKLAAIDVQRYIQLKPPGTRESLLQSAVVWEYQKSRNDNLYLLEKHGEKAFDSSLEALEVQLELLEKELVNTKKLSQGCNRKRKHYQMEVGARLAEAEVKFGQLLQSSIQCRVATLLS.

The protein belongs to the SPF27 family. In terms of assembly, belongs to the 40S cdc5-associated complex (or cwf complex), a spliceosome sub-complex reminiscent of a late-stage spliceosome composed of the U2, U5 and U6 snRNAs and at least brr2, cdc5, cwf2/prp3, cwf3/syf1, cwf4/syf3, cwf5/ecm2, spp42/cwf6, cwf7/spf27, cwf8, cwf9, cwf10, cwf11, cwf12, prp45/cwf13, cwf14, cwf15, cwf16, cwf17, cwf18, cwf19, cwf20, cwf21, cwf22, cwf23, cwf24, cwf25, cwf26, cyp7/cwf27, cwf28, cwf29/ist3, lea1, msl1, prp5/cwf1, prp10, prp12/sap130, prp17, prp22, sap61, sap62, sap114, sap145, slu7, smb1, smd1, smd3, smf1, smg1 and syf2.

Its subcellular location is the nucleus. Involved in mRNA splicing. The sequence is that of Pre-mRNA-splicing factor cwf7 (cwf7) from Schizosaccharomyces pombe (strain 972 / ATCC 24843) (Fission yeast).